A 446-amino-acid chain; its full sequence is Glutamine synthetase (446 aa).

Residues 14-106 enclose the GS beta-grasp domain; sequence NNVKFIRFQF…VICDVYTTNG (93 aa). The region spanning 113–446 is the GS catalytic domain; it reads PRGCLKRVLA…DWETKQYLKI (334 aa). Mg(2+)-binding residues include glutamate 137 and glutamate 139. Glutamate 187 is a binding site for ATP. Residues glutamate 192 and glutamate 199 each contribute to the Mg(2+) site. Residues 243–244 and glycine 244 each bind L-glutamate; that span reads NG. Histidine 248 lines the Mg(2+) pocket. Residues 250-252 and serine 252 each bind ATP; that span reads HQS. Positions 301, 307, and 319 each coordinate L-glutamate. ATP contacts are provided by arginine 319, arginine 324, and lysine 331. Glutamate 336 is a binding site for Mg(2+). An L-glutamate-binding site is contributed by arginine 338.

It belongs to the glutamine synthetase family. In terms of assembly, oligomer of 12 subunits arranged in the form of two hexagons. Mg(2+) is required as a cofactor.

The protein localises to the cytoplasm. It catalyses the reaction L-glutamate + NH4(+) + ATP = L-glutamine + ADP + phosphate + H(+). Probably involved in nitrogen metabolism via ammonium assimilation. Catalyzes the ATP-dependent biosynthesis of glutamine from glutamate and ammonia. The protein is Glutamine synthetase of Methanococcus maripaludis (strain DSM 14266 / JCM 13030 / NBRC 101832 / S2 / LL).